The chain runs to 686 residues: Methionine--tRNA ligase (686 aa).

Positions 13–23 (PYANGQIHIGH) match the 'HIGH' region motif. Positions 144, 147, 157, and 160 each coordinate Zn(2+). The 'KMSKS' region motif lies at 335–339 (KMSKS). Lysine 338 serves as a coordination point for ATP. The region spanning 580–686 (DFAKVDLRVA…EGAVPGMRIG (107 aa)) is the tRNA-binding domain.

The protein belongs to the class-I aminoacyl-tRNA synthetase family. MetG type 1 subfamily. Homodimer. Requires Zn(2+) as cofactor.

The protein resides in the cytoplasm. The enzyme catalyses tRNA(Met) + L-methionine + ATP = L-methionyl-tRNA(Met) + AMP + diphosphate. Is required not only for elongation of protein synthesis but also for the initiation of all mRNA translation through initiator tRNA(fMet) aminoacylation. In Cupriavidus necator (strain ATCC 17699 / DSM 428 / KCTC 22496 / NCIMB 10442 / H16 / Stanier 337) (Ralstonia eutropha), this protein is Methionine--tRNA ligase.